Reading from the N-terminus, the 586-residue chain is Scavenger receptor cysteine-rich domain-containing group B protein (586 aa).

The interval 1-33 (MGPSERPSIGWTPKEAEMQIGPQPDGWSRGWKP) is disordered. The N-terminal stretch at 1 to 58 (MGPSERPSIGWTPKEAEMQIGPQPDGWSRGWKPGDRGAVPLPLSPALSFLLLFPLASA) is a signal peptide. SRCR domains follow at residues 69–169 (LRLV…VLCD), 200–300 (VRLV…VLCA), 355–455 (LRLV…ALCA), and 484–584 (LRLA…VLCQ). 12 disulfide bridges follow: Cys94–Cys158, Cys107–Cys168, Cys138–Cys148, Cys225–Cys289, Cys238–Cys299, Cys269–Cys279, Cys380–Cys444, Cys393–Cys454, Cys424–Cys434, Cys509–Cys573, Cys522–Cys583, and Cys553–Cys563.

Its subcellular location is the secreted. This Mus musculus (Mouse) protein is Scavenger receptor cysteine-rich domain-containing group B protein.